Reading from the N-terminus, the 542-residue chain is Major facilitator superfamily domain-containing protein 6-like (542 aa).

A run of 11 helical transmembrane segments spans residues 46-66, 89-109, 198-218, 246-266, 272-292, 321-341, 352-372, 381-401, 404-424, 444-464, and 469-489; these read LGLS…LALL, LLSS…GILV, MFFL…PLEW, VGAA…FCRI, FYSY…LPIY, VTVI…LWLM, GICL…AGPL, WMLV…SFLW, WAVM…WWSV, FEAF…GFVV, and VNVL…ALAV.

Belongs to the major facilitator superfamily. MFSD6 family.

It localises to the membrane. In Danio rerio (Zebrafish), this protein is Major facilitator superfamily domain-containing protein 6-like (mfsd6l).